We begin with the raw amino-acid sequence, 113 residues long: MSDVSVPLTFSDVAAAKVKTLIAEEENPNLKLRVYITGGGCSGFQYGFTFDEEVNEGDMTLVNDGVTLVVDPMSLQYLIGGIVDYTEGLEGSRFFINNPNATTTCGCGASFSV.

Iron-sulfur cluster is bound by residues C41, C105, and C107.

Belongs to the HesB/IscA family. As to quaternary structure, homodimer. It depends on iron-sulfur cluster as a cofactor.

Required for insertion of 4Fe-4S clusters for at least IspG. The sequence is that of Iron-sulfur cluster insertion protein ErpA from Aliivibrio salmonicida (strain LFI1238) (Vibrio salmonicida (strain LFI1238)).